We begin with the raw amino-acid sequence, 65 residues long: Putative beta-neurotoxin RjAa7 (65 aa).

The LCN-type CS-alpha/beta domain occupies 1 to 64 (KEGYPVGRDG…VWDSSTNKCG (64 aa)). Cystine bridges form between Cys-11-Cys-63, Cys-15-Cys-37, Cys-22-Cys-44, and Cys-26-Cys-46.

This sequence belongs to the long (4 C-C) scorpion toxin superfamily. Sodium channel inhibitor family. Beta subfamily. As to expression, expressed by the venom gland.

It is found in the secreted. Functionally, beta toxins bind voltage-independently at site-4 of sodium channels (Nav) and shift the voltage of activation toward more negative potentials thereby affecting sodium channel activation and promoting spontaneous and repetitive firing. The sequence is that of Putative beta-neurotoxin RjAa7 from Rhopalurus junceus (Caribbean blue scorpion).